A 92-amino-acid chain; its full sequence is Small ribosomal subunit protein bS18 (92 aa).

The disordered stretch occupies residues 1 to 22; it reads MADERAPQRSTSGPRKKRPFQR.

The protein belongs to the bacterial ribosomal protein bS18 family. Part of the 30S ribosomal subunit. Forms a tight heterodimer with protein bS6.

Binds as a heterodimer with protein bS6 to the central domain of the 16S rRNA, where it helps stabilize the platform of the 30S subunit. The chain is Small ribosomal subunit protein bS18 from Citrifermentans bemidjiense (strain ATCC BAA-1014 / DSM 16622 / JCM 12645 / Bem) (Geobacter bemidjiensis).